Reading from the N-terminus, the 458-residue chain is Exodeoxyribonuclease 7 large subunit (458 aa).

The protein belongs to the XseA family. As to quaternary structure, heterooligomer composed of large and small subunits.

The protein localises to the cytoplasm. It carries out the reaction Exonucleolytic cleavage in either 5'- to 3'- or 3'- to 5'-direction to yield nucleoside 5'-phosphates.. Bidirectionally degrades single-stranded DNA into large acid-insoluble oligonucleotides, which are then degraded further into small acid-soluble oligonucleotides. This Yersinia enterocolitica serotype O:8 / biotype 1B (strain NCTC 13174 / 8081) protein is Exodeoxyribonuclease 7 large subunit.